The following is a 1214-amino-acid chain: Spliceosome-associated protein 130 A (1214 aa).

The tract at residues 817 to 848 is disordered; it reads AGGVGENGNGNADQMENGADDEDKEDPLSDEQ. Acidic residues predominate over residues 834 to 845; sequence GADDEDKEDPLS.

This sequence belongs to the RSE1 family. In terms of assembly, identified in the spliceosome C complex. Component of the U11/U12 snRNPs that are part of the U12-type spliceosome. Component of splicing factor SF3B complex. Expressed at low levels in roots, leaves, inflorescence and, to a lower extent, in siliques.

It localises to the nucleus. Its function is as follows. Subunit of the splicing factor SF3B required for 'A' complex assembly formed by the stable binding of U2 snRNP to the branchpoint sequence (BPS) in pre-mRNA. Sequence independent binding of SF3A/SF3B complex upstream of the branch site is essential, it may anchor U2 snRNP to the pre-mRNA. May also be involved in the assembly of the 'E' complex. Also belongs to the minor U12-dependent spliceosome, which is involved in the splicing of rare class of nuclear pre-mRNA intron. Required for pollen and ovule development, especially during the transition from microspore to the bicellular stage in pollen development. Involved in the accumulation of QRT1 and QRT3. The sequence is that of Spliceosome-associated protein 130 A from Arabidopsis thaliana (Mouse-ear cress).